The sequence spans 251 residues: Cyclohexanol dehydrogenase (251 aa).

6 residues coordinate NAD(+): aspartate 42, asparagine 95, tyrosine 161, lysine 165, isoleucine 194, and threonine 196. The Proton acceptor role is filled by tyrosine 161.

It belongs to the short-chain dehydrogenases/reductases (SDR) family.

It catalyses the reaction cyclohexanol + NAD(+) = cyclohexanone + NADH + H(+). Functionally, catalyzes the oxidation of cyclohexanol to cyclohexanone. Required for the conversion of cyclohexanol to adipic acid. The sequence is that of Cyclohexanol dehydrogenase from Acinetobacter sp. (strain SE19).